Reading from the N-terminus, the 745-residue chain is Exocyst complex component 3 (745 aa).

Lys-28 carries the N6-acetyllysine modification.

This sequence belongs to the SEC6 family. In terms of assembly, the exocyst complex is composed of EXOC1, EXOC2, EXOC3, EXOC4, EXOC5, EXOC6, EXOC7 and EXOC8. Interacts with EXOC3L1. Interacts with BIRC6/bruce. Interacts with MYRIP. Interacts with SLC6A9.

The protein resides in the cytoplasm. It localises to the perinuclear region. Its subcellular location is the cell projection. The protein localises to the growth cone. It is found in the neuron projection. The protein resides in the midbody. It localises to the golgi apparatus. Functionally, component of the exocyst complex involved in the docking of exocytic vesicles with fusion sites on the plasma membrane. The polypeptide is Exocyst complex component 3 (EXOC3) (Bos taurus (Bovine)).